The sequence spans 42 residues: uncharacterized protein (42 aa).

The segment at M1–H42 is disordered. Residues S32–H42 are compositionally biased toward pro residues.

This is an uncharacterized protein from Schizosaccharomyces pombe (strain 972 / ATCC 24843) (Fission yeast).